Consider the following 556-residue polypeptide: Interleukin-1 receptor-like 1 (556 aa).

The N-terminal stretch at 1 to 18 is a signal peptide; that stretch reads MGFWILAILTILMYSTAA. Ig-like C2-type domains lie at 19-103 and 114-197; these read KFSK…ANVT and PDYL…VTAT. Residues 19–328 lie on the Extracellular side of the membrane; that stretch reads KFSKQSWGLE…SRKNPIDHHS (310 aa). Cys-36 and Cys-87 form a disulfide bridge. Residues Asn-54, Asn-95, Asn-101, Asn-140, and Asn-191 are each glycosylated (N-linked (GlcNAc...) asparagine). Disulfide bonds link Cys-111-Cys-151 and Cys-133-Cys-181. Residues 198–211 form a flexible linker region; that stretch reads RSFTVKDEQGFSLF. Residues 212–319 enclose the Ig-like C2-type 3 domain; sequence PVIGAPAQNE…GLRRHTVRLS (108 aa). N-linked (GlcNAc...) asparagine glycans are attached at residues Asn-232, Asn-254, and Asn-273. 2 disulfides stabilise this stretch: Cys-235–Cys-303 and Cys-238–Cys-282. Residue Lys-321 forms a Glycyl lysine isopeptide (Lys-Gly) (interchain with G-Cter in ubiquitin) linkage. A helical membrane pass occupies residues 329–349; that stretch reads IYCIIAVCSVFLMLINVLVII. The Cytoplasmic portion of the chain corresponds to 350-556; sequence LKMFWIEATL…SLTPLAAQKQ (207 aa). The TIR domain occupies 375–535; that stretch reads KLYDAYVVYP…KFWKHVRYQM (161 aa). Glu-461 is an active-site residue.

It belongs to the interleukin-1 receptor family. In terms of assembly, interacts with MYD88, IRAK1, IRAK4, and TRAF6. Bound to its ligand IL-33, interacts with IL1RAP to form the minimal interleukin-33 signaling complex with a 1:1:1 stoichiometry. Interacts with KIT (bound to KITLG/SCF). A mast cell-specific KITLG/SCF-induced interleukin-33 signaling complex contains IL1RL1, IL1RAP, KIT and MYD88. Interacts with TMED1. Post-translationally, ubiquitinated at Lys-321 in a FBXL19-mediated manner; leading to proteasomal degradation. Ubiquitination by TRAF6 via 'Lys-27'-linked polyubiquitination and deubiquitination by USP38 serves as a critical regulatory mechanism for fine-tuning IL1RL1-mediated inflammatory response. In terms of tissue distribution, highly expressed in kidney, lung, placenta, stomach, skeletal muscle, colon and small intestine. Isoform A is prevalently expressed in the lung, testis, placenta, stomach and colon. Isoform B is more abundant in the brain, kidney and the liver. Isoform C is not detected in brain, heart, liver, kidney and skeletal muscle. Expressed on T-cells in fibrotic liver; at protein level. Overexpressed in fibrotic and cirrhotic liver.

It localises to the cell membrane. It is found in the secreted. The enzyme catalyses NAD(+) + H2O = ADP-D-ribose + nicotinamide + H(+). In terms of biological role, receptor for interleukin-33 (IL-33) which plays crucial roles in innate and adaptive immunity, contributing to tissue homeostasis and responses to environmental stresses together with coreceptor IL1RAP. Its stimulation recruits MYD88, IRAK1, IRAK4, and TRAF6, followed by phosphorylation of MAPK3/ERK1 and/or MAPK1/ERK2, MAPK14, and MAPK8. Possibly involved in helper T-cell function. Upon tissue injury, induces UCP2-dependent mitochondrial rewiring that attenuates the generation of reactive oxygen species and preserves the integrity of Krebs cycle required for persistent production of itaconate and subsequent GATA3-dependent differentiation of inflammation-resolving alternatively activated macrophages. Its function is as follows. Inhibits IL-33 signaling. This chain is Interleukin-1 receptor-like 1 (IL1RL1), found in Homo sapiens (Human).